Consider the following 340-residue polypeptide: Ketol-acid reductoisomerase (NADP(+)) (340 aa).

One can recognise a KARI N-terminal Rossmann domain in the interval 1-182 (MTVTMQYEKD…GSARVGLLET (182 aa)). Residues 26-29 (YGSQ), Arg49, Ser53, and 83-86 (DEIQ) contribute to the NADP(+) site. Residue His108 is part of the active site. Position 134 (Gly134) interacts with NADP(+). A KARI C-terminal knotted domain is found at 183–328 (TFKEETEEDL…AELRKAMPFV (146 aa)). Mg(2+) contacts are provided by Asp191, Glu195, Glu227, and Glu231. Position 252 (Ser252) interacts with substrate.

It belongs to the ketol-acid reductoisomerase family. It depends on Mg(2+) as a cofactor.

The catalysed reaction is (2R)-2,3-dihydroxy-3-methylbutanoate + NADP(+) = (2S)-2-acetolactate + NADPH + H(+). The enzyme catalyses (2R,3R)-2,3-dihydroxy-3-methylpentanoate + NADP(+) = (S)-2-ethyl-2-hydroxy-3-oxobutanoate + NADPH + H(+). It functions in the pathway amino-acid biosynthesis; L-isoleucine biosynthesis; L-isoleucine from 2-oxobutanoate: step 2/4. The protein operates within amino-acid biosynthesis; L-valine biosynthesis; L-valine from pyruvate: step 2/4. In terms of biological role, involved in the biosynthesis of branched-chain amino acids (BCAA). Catalyzes an alkyl-migration followed by a ketol-acid reduction of (S)-2-acetolactate (S2AL) to yield (R)-2,3-dihydroxy-isovalerate. In the isomerase reaction, S2AL is rearranged via a Mg-dependent methyl migration to produce 3-hydroxy-3-methyl-2-ketobutyrate (HMKB). In the reductase reaction, this 2-ketoacid undergoes a metal-dependent reduction by NADPH to yield (R)-2,3-dihydroxy-isovalerate. This chain is Ketol-acid reductoisomerase (NADP(+)), found in Streptococcus suis (strain 98HAH33).